Reading from the N-terminus, the 455-residue chain is Kynurenine 3-monooxygenase (455 aa).

The protein belongs to the aromatic-ring hydroxylase family. KMO subfamily. Requires FAD as cofactor.

It catalyses the reaction L-kynurenine + NADPH + O2 + H(+) = 3-hydroxy-L-kynurenine + NADP(+) + H2O. It participates in cofactor biosynthesis; NAD(+) biosynthesis; quinolinate from L-kynurenine: step 1/3. Functionally, catalyzes the hydroxylation of L-kynurenine (L-Kyn) to form 3-hydroxy-L-kynurenine (L-3OHKyn). Required for synthesis of quinolinic acid. This is Kynurenine 3-monooxygenase from Xanthomonas euvesicatoria pv. vesicatoria (strain 85-10) (Xanthomonas campestris pv. vesicatoria).